Reading from the N-terminus, the 467-residue chain is Neuromedin-K receptor (467 aa).

Residues methionine 1–arginine 86 are Extracellular-facing. Asparagine 23, asparagine 50, and asparagine 75 each carry an N-linked (GlcNAc...) asparagine glycan. A helical membrane pass occupies residues isoleucine 87–isoleucine 109. The Cytoplasmic portion of the chain corresponds to tryptophan 110–arginine 119. Residues threonine 120–threonine 141 form a helical membrane-spanning segment. Residues leucine 142–arginine 161 are Extracellular-facing. The cysteines at positions 160 and 235 are disulfide-linked. The helical transmembrane segment at phenylalanine 162–valine 183 threads the bilayer. The Cytoplasmic portion of the chain corresponds to aspartate 184–lysine 203. A helical membrane pass occupies residues isoleucine 204–serine 224. Residues lysine 225 to phenylalanine 247 are Extracellular-facing. A helical transmembrane segment spans residues isoleucine 248–valine 272. The Cytoplasmic segment spans residues glycine 273–lysine 301. A helical membrane pass occupies residues methionine 302–leucine 323. Residues threonine 324–isoleucine 336 are Extracellular-facing. Residues glutamine 337–leucine 361 form a helical membrane-spanning segment. Residues asparagine 362–serine 467 are Cytoplasmic-facing. Residue cysteine 376 is the site of S-palmitoyl cysteine attachment. The disordered stretch occupies residues aspartate 416–serine 467. A compositionally biased stretch (low complexity) spans lysine 447–serine 467.

It belongs to the G-protein coupled receptor 1 family.

The protein resides in the cell membrane. In terms of biological role, this is a receptor for the tachykinin neuropeptide neuromedin-K (neurokinin B). It is associated with G proteins that activate a phosphatidylinositol-calcium second messenger system. The polypeptide is Neuromedin-K receptor (TACR3) (Oryctolagus cuniculus (Rabbit)).